The sequence spans 65 residues: Large ribosomal subunit protein bL35 (65 aa).

Belongs to the bacterial ribosomal protein bL35 family.

This Synechococcus sp. (strain CC9311) protein is Large ribosomal subunit protein bL35.